The chain runs to 811 residues: G-type lectin S-receptor-like serine/threonine-protein kinase LECRK2 (811 aa).

The signal sequence occupies residues 1-23 (MAPILFLPILQILLIYCTKSAQA). In terms of domain architecture, Bulb-type lectin spans 24 to 153 (QLNISIGSSL…DGATKWESFG (130 aa)). At 24-464 (QLNISIGSSL…DKKYWILGSS (441 aa)) the chain is on the extracellular side. Asparagine 26, asparagine 39, asparagine 59, asparagine 219, asparagine 226, asparagine 237, and asparagine 242 each carry an N-linked (GlcNAc...) asparagine glycan. Residues 292–344 (PENICQTIQTKVGSGACGFNSYCTFDGTKNTTNCLCPQRYKFFDNERTYKGCR) enclose the EGF-like; atypical domain. 5 cysteine pairs are disulfide-bonded: cysteine 296-cysteine 314, cysteine 308-cysteine 325, cysteine 327-cysteine 343, cysteine 389-cysteine 411, and cysteine 393-cysteine 399. A glycan (N-linked (GlcNAc...) asparagine) is linked at asparagine 321. Residues 352–436 (CDLDETAAMV…LQATVLLKVP (85 aa)) form the PAN domain. A helical transmembrane segment spans residues 465–485 (LFFGSSVLVNFLLIFVLLFGT). Residues 486 to 811 (YCSITSRKKT…DPSSYISSLA (326 aa)) are Cytoplasmic-facing. The Protein kinase domain occupies 521–795 (GGFHEVLGTG…KVMQMLDGAV (275 aa)). ATP is bound by residues 527–535 (LGTGASGIV) and lysine 551. Aspartate 645 functions as the Proton acceptor in the catalytic mechanism.

The protein belongs to the protein kinase superfamily. Ser/Thr protein kinase family.

It localises to the membrane. The catalysed reaction is L-seryl-[protein] + ATP = O-phospho-L-seryl-[protein] + ADP + H(+). The enzyme catalyses L-threonyl-[protein] + ATP = O-phospho-L-threonyl-[protein] + ADP + H(+). Involved in resistance against the herbivorous insect brown planthopper (N.lugens, BPH). Member of the BPH3 (BPH resistance locus 3) cluster which contains LECRK1, LECRK2 and LECRK3. This is G-type lectin S-receptor-like serine/threonine-protein kinase LECRK2 from Oryza sativa subsp. indica (Rice).